A 326-amino-acid polypeptide reads, in one-letter code: MAEVEKVREKEVEKEVERKEIEREEDVEVCPECGSPRLIRDYRRGEFICQDCGLVIEDTYIDAGPEWRAFDSEQRDKRSRVGAPVTYTIHDKGLSTIIDWSNKDYYGKAISVRNRAQLFRLRKWQRRIRISNATERNLAFALSELDRMASALGLPKSVRETAAVIYRKAVEKNLIRGRSIEGVVAAALYAACRQAGVPRTLDEIATYSRVDRKEIGRTYRFITRELGLKLMPTSPADYIPRFCAALGLSGEVQKKAIEIIKKAEERELTSGRGPTGVAAAALYVASILLGERRTQREVAEVAGVTEVTIRNRYKELAEKLGIEIIL.

The TFIIB-type zinc finger occupies 26 to 57 (DVEVCPECGSPRLIRDYRRGEFICQDCGLVIE). The Zn(2+) site is built by Cys30, Cys33, Cys49, and Cys52. A run of 2 repeats spans residues 143–226 (SELD…TREL) and 237–318 (DYIP…ELAE).

This sequence belongs to the TFIIB family.

Stabilizes TBP binding to an archaeal box-A promoter. Also responsible for recruiting RNA polymerase II to the pre-initiation complex (DNA-TBP-TFIIB). The sequence is that of Transcription initiation factor IIB from Archaeoglobus fulgidus (strain ATCC 49558 / DSM 4304 / JCM 9628 / NBRC 100126 / VC-16).